Reading from the N-terminus, the 451-residue chain is G-protein coupled receptor 61 (451 aa).

Low complexity predominate over residues 1 to 14; sequence MESSPIPQSSGNSS. Residues 1 to 31 form a disordered region; that stretch reads MESSPIPQSSGNSSTLGRVPQTPGPSTASGV. The Extracellular segment spans residues 1 to 44; the sequence is MESSPIPQSSGNSSTLGRVPQTPGPSTASGVPEVGLRDVASESV. N-linked (GlcNAc...) asparagine glycosylation is present at asparagine 12. The chain crosses the membrane as a helical span at residues 45 to 67; sequence ALFFMLLLDLTAVAGNAAVMAVI. Residues 68–75 are Cytoplasmic-facing; that stretch reads AKTPALRK. Residues 76–98 form a helical membrane-spanning segment; the sequence is FVFVFHLCLVDLLAALTLMPLAM. The Extracellular segment spans residues 99–112; sequence LSSSALFDHALFGE. A helical transmembrane segment spans residues 113-135; that stretch reads VACRLYLFLSVCFVSLAILSVSA. Residues 136 to 155 lie on the Cytoplasmic side of the membrane; the sequence is INVERYYYVVHPMRYEVRMT. The helical transmembrane segment at 156-178 threads the bilayer; it reads LGLVASVLVGVWVKALAMASVPV. The Extracellular portion of the chain corresponds to 179–206; that stretch reads LGRVSWEEGAPSVPPGCSLQWSHSAYCQ. Residues 207–229 traverse the membrane as a helical segment; it reads LFVVVFAVLYFLLPLLLILVVYC. Topologically, residues 230 to 287 are cytoplasmic; it reads SMFRVARVAAMQHGPLPTWMETPRQRSESLSSRSTMVTSSGAPQTTPHRTFGGGKAAV. A helical membrane pass occupies residues 288-310; the sequence is VLLAVGGQFLLCWLPYFSFHLYV. Topologically, residues 311-324 are extracellular; sequence ALSAQPISTGQVES. Residues 325 to 344 traverse the membrane as a helical segment; that stretch reads VVTWIGYFCFTSNPFFYGCL. The Cytoplasmic segment spans residues 345–451; sequence NRQIRGELSK…RPAASPRLES (107 aa).

This sequence belongs to the G-protein coupled receptor 1 family. Forms heterodimer with MTNR1B. Interacts with ARRB1 and ARRB2 in a spontaneous and agonist-independent manner; leading to the internalization of GPR61 in the endosomal compartment. In terms of tissue distribution, expressed in brain; detected in frontal and temporal lobes, occipital pole, amygdala and hippocampus. Also expressed in testis and T cells, B cells, and monocyte. Low expression in many other tissues. Widely expressed in the hippocampus (at protein level).

It is found in the cell membrane. Its subcellular location is the endosome membrane. Orphan G-protein coupled receptor. Constitutively activates the G(s)-alpha/cAMP signaling pathway. Shows a reciprocal regulatory interaction with the melatonin receptor MTNR1B most likely through receptor heteromerization. May be involved in the regulation of food intake and body weight. The sequence is that of G-protein coupled receptor 61 (GPR61) from Homo sapiens (Human).